The primary structure comprises 283 residues: MEQKIVNIGDIQVANDKPFTLFAGMNVLESRDLAMQICEHYVKVTDKLGIPYVFKASFDKANRSSVHSYRGPGLEEGMKIFQELKDTFGVKIITDVHTEAQAQPVADVVDVIQLPAFLARQTDLVEAMAKTGAVINVKKPQFMSPGQVGNIVEKFAECGNENIILCERGSCMGYDNLVVDMLGFGVMKNASKGSPIIFDVTHSLQMRDPSGAASGGRREQTVELAKAGLATGIAGLFIEAHPNPDQARCDGPSALPLDKLEPFLAQMKSLDDLIKSFADIDIK.

The protein belongs to the KdsA family.

Its subcellular location is the cytoplasm. It catalyses the reaction D-arabinose 5-phosphate + phosphoenolpyruvate + H2O = 3-deoxy-alpha-D-manno-2-octulosonate-8-phosphate + phosphate. The protein operates within carbohydrate biosynthesis; 3-deoxy-D-manno-octulosonate biosynthesis; 3-deoxy-D-manno-octulosonate from D-ribulose 5-phosphate: step 2/3. Its pathway is bacterial outer membrane biogenesis; lipopolysaccharide biosynthesis. This Vibrio campbellii (strain ATCC BAA-1116) protein is 2-dehydro-3-deoxyphosphooctonate aldolase.